A 463-amino-acid chain; its full sequence is Glutamyl-tRNA reductase (463 aa).

Substrate is bound by residues 49-52 (TCNR), serine 109, 114-116 (EQQ), and glutamine 120. Cysteine 50 functions as the Nucleophile in the catalytic mechanism. NADP(+) is bound at residue 196 to 201 (GAGAMS).

Belongs to the glutamyl-tRNA reductase family. In terms of assembly, homodimer.

It catalyses the reaction (S)-4-amino-5-oxopentanoate + tRNA(Glu) + NADP(+) = L-glutamyl-tRNA(Glu) + NADPH + H(+). It participates in porphyrin-containing compound metabolism; protoporphyrin-IX biosynthesis; 5-aminolevulinate from L-glutamyl-tRNA(Glu): step 1/2. Catalyzes the NADPH-dependent reduction of glutamyl-tRNA(Glu) to glutamate 1-semialdehyde (GSA). The chain is Glutamyl-tRNA reductase from Corynebacterium glutamicum (strain ATCC 13032 / DSM 20300 / JCM 1318 / BCRC 11384 / CCUG 27702 / LMG 3730 / NBRC 12168 / NCIMB 10025 / NRRL B-2784 / 534).